We begin with the raw amino-acid sequence, 263 residues long: Indole-3-glycerol phosphate synthase (263 aa).

It belongs to the TrpC family.

It carries out the reaction 1-(2-carboxyphenylamino)-1-deoxy-D-ribulose 5-phosphate + H(+) = (1S,2R)-1-C-(indol-3-yl)glycerol 3-phosphate + CO2 + H2O. It participates in amino-acid biosynthesis; L-tryptophan biosynthesis; L-tryptophan from chorismate: step 4/5. This is Indole-3-glycerol phosphate synthase from Rhodospirillum rubrum (strain ATCC 11170 / ATH 1.1.1 / DSM 467 / LMG 4362 / NCIMB 8255 / S1).